Here is a 186-residue protein sequence, read N- to C-terminus: Protein MTH_152 (186 aa).

The protein belongs to the flavoredoxin family. In terms of assembly, homodimer. It depends on FMN as a cofactor.

The chain is Protein MTH_152 from Methanothermobacter thermautotrophicus (strain ATCC 29096 / DSM 1053 / JCM 10044 / NBRC 100330 / Delta H) (Methanobacterium thermoautotrophicum).